A 604-amino-acid polypeptide reads, in one-letter code: Sulfite reductase [NADPH] flavoprotein alpha-component (604 aa).

The region spanning 65 to 203 is the Flavodoxin-like domain; sequence VTILYGSQTG…AAGQWHADVL (139 aa). Residues 71-76, 118-121, and 154-163 each bind FMN; these read SQTGNG, STHG, and LGDSSYEFFC. The region spanning 236–453 is the FAD-binding FR-type domain; the sequence is QNPYSAEVLV…VEPNKHFRLP (218 aa). Residues Thr-324, Leu-358, 392–395, 410–412, and 425–428 each bind FAD; these read RLYS, TVA, and GGAS. Residues 524–525, 530–534, and Asp-566 contribute to the NADP(+) site; these read SR and KIYVQ. Residue Tyr-604 coordinates FAD.

This sequence belongs to the NADPH-dependent sulphite reductase flavoprotein subunit CysJ family. In the N-terminal section; belongs to the flavodoxin family. It in the C-terminal section; belongs to the flavoprotein pyridine nucleotide cytochrome reductase family. As to quaternary structure, alpha(8)-beta(8). The alpha component is a flavoprotein, the beta component is a hemoprotein. FAD serves as cofactor. It depends on FMN as a cofactor.

The catalysed reaction is hydrogen sulfide + 3 NADP(+) + 3 H2O = sulfite + 3 NADPH + 4 H(+). It functions in the pathway sulfur metabolism; hydrogen sulfide biosynthesis; hydrogen sulfide from sulfite (NADPH route): step 1/1. Its function is as follows. Component of the sulfite reductase complex that catalyzes the 6-electron reduction of sulfite to sulfide. This is one of several activities required for the biosynthesis of L-cysteine from sulfate. The flavoprotein component catalyzes the electron flow from NADPH -&gt; FAD -&gt; FMN to the hemoprotein component. The sequence is that of Sulfite reductase [NADPH] flavoprotein alpha-component from Shewanella sp. (strain MR-7).